A 179-amino-acid polypeptide reads, in one-letter code: Large ribosomal subunit protein uL6 (179 aa).

This sequence belongs to the universal ribosomal protein uL6 family. In terms of assembly, part of the 50S ribosomal subunit.

This protein binds to the 23S rRNA, and is important in its secondary structure. It is located near the subunit interface in the base of the L7/L12 stalk, and near the tRNA binding site of the peptidyltransferase center. The chain is Large ribosomal subunit protein uL6 from Crocosphaera subtropica (strain ATCC 51142 / BH68) (Cyanothece sp. (strain ATCC 51142)).